We begin with the raw amino-acid sequence, 337 residues long: Nucleoid-associated protein HSM_0096 (337 aa).

This sequence belongs to the YejK family.

It localises to the cytoplasm. It is found in the nucleoid. The sequence is that of Nucleoid-associated protein HSM_0096 from Histophilus somni (strain 2336) (Haemophilus somnus).